Here is a 298-residue protein sequence, read N- to C-terminus: Pantothenate synthetase (298 aa).

30–37 (MGNLHEGH) is an ATP binding site. Residue His-37 is the Proton donor of the active site. Gln-61 is a binding site for (R)-pantoate. Gln-61 lines the beta-alanine pocket. 149–152 (GEKD) serves as a coordination point for ATP. (R)-pantoate is bound at residue Gln-155. ATP is bound by residues Val-178 and 186–189 (MSSR).

This sequence belongs to the pantothenate synthetase family. Homodimer.

It is found in the cytoplasm. The catalysed reaction is (R)-pantoate + beta-alanine + ATP = (R)-pantothenate + AMP + diphosphate + H(+). The protein operates within cofactor biosynthesis; (R)-pantothenate biosynthesis; (R)-pantothenate from (R)-pantoate and beta-alanine: step 1/1. Its function is as follows. Catalyzes the condensation of pantoate with beta-alanine in an ATP-dependent reaction via a pantoyl-adenylate intermediate. The protein is Pantothenate synthetase of Aliivibrio salmonicida (strain LFI1238) (Vibrio salmonicida (strain LFI1238)).